The following is a 269-amino-acid chain: Histone doublet H2B-H2A (269 aa).

The histone fold stretch occupies residues 1–168 (MATQKETTRK…LAGNAARDSK (168 aa)). A disordered region spans residues 210-249 (RKKARKTTEKEASSPKKKAAPKKKKAASKQKKSLSDKELA). Positions 224–241 (PKKKAAPKKKKAASKQKK) are enriched in basic residues.

It is found in the host nucleus. Its subcellular location is the host cytoplasm. The protein resides in the virion. Histone-like protein that is recruited to viral factories during viral replication and participates in viral DNA packaging and virion production probably by forming unstable nucleosome-like particles. May compact the viral DNA. In Melbournevirus (MelV), this protein is Histone doublet H2B-H2A.